We begin with the raw amino-acid sequence, 461 residues long: BSD domain-containing protein 1 (461 aa).

A phosphoserine mark is found at Ser123 and Ser197. The BSD domain maps to 177–229 (WLSQFCLEEKKGEISELLVGSPSIRALYTKMVPAAVSHSEFWHRYFYKVHQLE). The segment at 239-384 (KQRAEQSISE…SGPEPRPPAR (146 aa)) is disordered. The segment covering 250 to 259 (PGWEEEEEEL) has biased composition (acidic residues). Residues 295 to 318 (LVTPVEPPTEVTPSESSESVSLVT) show a composition bias toward low complexity. The residue at position 387 (Thr387) is a Phosphothreonine. The segment at 398–430 (VFELNSDSGKSTPSNNGKKGSSTDISEDWEKDF) is disordered. Residues 402–421 (NSDSGKSTPSNNGKKGSSTD) show a composition bias toward polar residues. A phosphoserine mark is found at Ser418, Ser419, and Ser449.

This is BSD domain-containing protein 1 (BSDC1) from Bos taurus (Bovine).